The chain runs to 488 residues: Regulatory protein ViaA (488 aa).

The protein belongs to the ViaA family. As to quaternary structure, homodimer. Interacts with RavA.

It localises to the cytoplasm. In terms of biological role, component of the RavA-ViaA chaperone complex, which may act on the membrane to optimize the function of some of the respiratory chains. ViaA stimulates the ATPase activity of RavA. In Yersinia enterocolitica serotype O:8 / biotype 1B (strain NCTC 13174 / 8081), this protein is Regulatory protein ViaA.